The sequence spans 1935 residues: Myosin-7 (1935 aa).

In terms of domain architecture, Myosin N-terminal SH3-like spans 32–81; that stretch reads DLKKDVYVPDDKEEFVKAKILSREGGKVTAETEHGKTVTVKEDQVLQQNP. The region spanning 85–778 is the Myosin motor domain; it reads DKIEDMAMLT…LLGLLEEMRD (694 aa). At Lys-129 the chain carries N6,N6,N6-trimethyllysine. 178–185 serves as a coordination point for ATP; the sequence is GESGAGKT. Thr-378 is modified (phosphothreonine). Actin-binding stretches follow at residues 655-677 and 757-771; these read LNKL…IPNE and KFGH…GLLG. The region spanning 781–810 is the IQ domain; the sequence is LSRIITRIQAQSRGVLSRMEFKKLLERRDS. Residues 839–1935 are a coiled coil; sequence LLKSAETEKE…DIGTKGLNEE (1097 aa). A phosphoserine mark is found at Ser-1137 and Ser-1269. The residue at position 1282 (Thr-1282) is a Phosphothreonine. Tyr-1308 is modified (phosphotyrosine). The residue at position 1309 (Thr-1309) is a Phosphothreonine. Ser-1510 carries the phosphoserine modification. Thr-1513 is subject to Phosphothreonine. Positions 1907-1935 are disordered; it reads EERADIAESQVNKLRAKSRDIGTKGLNEE. The segment covering 1923-1935 has biased composition (basic and acidic residues); the sequence is KSRDIGTKGLNEE.

It belongs to the TRAFAC class myosin-kinesin ATPase superfamily. Myosin family. Muscle myosin is a hexameric protein that consists of 2 heavy chain subunits (MHC), 2 alkali light chain subunits (MLC) and 2 regulatory light chain subunits (MLC-2). Interacts with ECPAS. Interacts (via C-terminus) with LRRC39.

It localises to the cytoplasm. Its subcellular location is the myofibril. The protein resides in the sarcomere. Its function is as follows. Myosins are actin-based motor molecules with ATPase activity essential for muscle contraction. Forms regular bipolar thick filaments that, together with actin thin filaments, constitute the fundamental contractile unit of skeletal and cardiac muscle. This Sus scrofa (Pig) protein is Myosin-7 (MYH7).